The sequence spans 966 residues: Translation initiation factor IF-2 (966 aa).

Composition is skewed to basic and acidic residues over residues 99-113 (KRDEAGADQHNEAAD), 123-183 (EQAR…KAEE), 197-212 (DASRKKAEDEQARVAV), 220-249 (AADDAKAAADKARAEQDAARKRREAAEAEA), and 266-277 (PSERKAEEKKAE). Positions 99 to 382 (KRDEAGADQH…NFQAPTEPVV (284 aa)) are disordered. Over residues 304 to 315 (AATTTTTTATTT) the composition is skewed to low complexity. A compositionally biased stretch (gly residues) spans 346 to 359 (SSGGVGGWRGGPRG). Residues 466-635 (PRPPVVTVMG…LLQAEVLELK (170 aa)) form the tr-type G domain. Residues 475-482 (GHVDHGKT) form a G1 region. 475 to 482 (GHVDHGKT) is a GTP binding site. Positions 500–504 (GITQH) are G2. The tract at residues 521–524 (DTPG) is G3. Residues 521 to 525 (DTPGH) and 575 to 578 (NKID) contribute to the GTP site. The segment at 575–578 (NKID) is G4. The tract at residues 611–613 (SAK) is G5.

This sequence belongs to the TRAFAC class translation factor GTPase superfamily. Classic translation factor GTPase family. IF-2 subfamily.

It localises to the cytoplasm. One of the essential components for the initiation of protein synthesis. Protects formylmethionyl-tRNA from spontaneous hydrolysis and promotes its binding to the 30S ribosomal subunits. Also involved in the hydrolysis of GTP during the formation of the 70S ribosomal complex. The chain is Translation initiation factor IF-2 from Cupriavidus pinatubonensis (strain JMP 134 / LMG 1197) (Cupriavidus necator (strain JMP 134)).